Here is a 95-residue protein sequence, read N- to C-terminus: Small ribosomal subunit protein bS6 (95 aa).

It belongs to the bacterial ribosomal protein bS6 family.

Binds together with bS18 to 16S ribosomal RNA. This chain is Small ribosomal subunit protein bS6, found in Clostridium novyi (strain NT).